A 429-amino-acid chain; its full sequence is L-dopachrome tautomerase yellow-f (429 aa).

An N-terminal signal peptide occupies residues 1-23 (MLSLDVLLLCAISGFQLLISADG). Residues N133 and N372 are each glycosylated (N-linked (GlcNAc...) asparagine).

The protein belongs to the major royal jelly protein family.

The protein localises to the secreted. It carries out the reaction L-dopachrome = 5,6-dihydroxyindole-2-carboxylate. It functions in the pathway pigment biosynthesis; melanin biosynthesis. In terms of biological role, tautomerization of L-dopachrome with decarboxylation to give 5,6-dihydroxyindole (DHI). Also catalyzes the tautomerization of the methyl ester of L-dopachrome and dopamine chrome. May play a role in melanization reactions during late pupal and adult stages. May play a role in melanization reactions during larval and early pupal stages. In Drosophila melanogaster (Fruit fly), this protein is L-dopachrome tautomerase yellow-f.